The sequence spans 95 residues: Secreted RxLR effector protein 20 (95 aa).

A signal peptide spans 1 to 20; it reads MQSPYIILFALVTLLGSISG. A RxLR motif is present at residues 47–50; sequence RLLR.

It belongs to the RxLR effector family.

Its subcellular location is the secreted. The protein localises to the host nucleus. The protein resides in the host cytoplasm. Secreted effector that partially suppresses the host cell death induced by cell death-inducing proteins. This is Secreted RxLR effector protein 20 from Plasmopara viticola (Downy mildew of grapevine).